The sequence spans 448 residues: Exodeoxyribonuclease 7 large subunit (448 aa).

It belongs to the XseA family. As to quaternary structure, heterooligomer composed of large and small subunits.

The protein resides in the cytoplasm. The enzyme catalyses Exonucleolytic cleavage in either 5'- to 3'- or 3'- to 5'-direction to yield nucleoside 5'-phosphates.. Functionally, bidirectionally degrades single-stranded DNA into large acid-insoluble oligonucleotides, which are then degraded further into small acid-soluble oligonucleotides. In Enterococcus faecalis (strain ATCC 700802 / V583), this protein is Exodeoxyribonuclease 7 large subunit.